Consider the following 426-residue polypeptide: MLDIKRVRDNFAEIKEMLLTRNEDLGNLDDFENLDAKRRELIAKTEELKAERNKVSEQISVMKRNKENADEVIARMRQVGDEIKELDIQLNDVEDRFKDMMMRLPNVPHESVPVGTTEDDNVEEYTWGEIPAFDFEIKAHWDLATDLKIVDFERGAKVTGSRFLFYRGLGARLERALMTFMMDLHAEEHGYEEMLPPVIVNRESLTGTGQLPKFEEDVFKLAETDYFMIPTAEVPVTNFYRDEILTAEALPQGFAAYSACFRSEAGSAGRDTRGLIRQHQFNKVELVRFVKPEESYEQLELLTGHAEKVLQLLGLPYRKLKMCTADLGFTAAKKYDLEVWIPAQNMYREISSCSNFEDFQARRANIRFRREPNAKPEYVHTLNGSGLAIGRTVAAILENYQQADGSVVIPEVLRPYMGGKEVIAPK.

231 to 233 contacts L-serine; it reads TAE. Position 262 to 264 (262 to 264) interacts with ATP; that stretch reads RSE. L-serine is bound at residue glutamate 285. ATP is bound at residue 349 to 352; it reads EISS. Residue serine 385 participates in L-serine binding.

Belongs to the class-II aminoacyl-tRNA synthetase family. Type-1 seryl-tRNA synthetase subfamily. In terms of assembly, homodimer. The tRNA molecule binds across the dimer.

The protein resides in the cytoplasm. The catalysed reaction is tRNA(Ser) + L-serine + ATP = L-seryl-tRNA(Ser) + AMP + diphosphate + H(+). It catalyses the reaction tRNA(Sec) + L-serine + ATP = L-seryl-tRNA(Sec) + AMP + diphosphate + H(+). It functions in the pathway aminoacyl-tRNA biosynthesis; selenocysteinyl-tRNA(Sec) biosynthesis; L-seryl-tRNA(Sec) from L-serine and tRNA(Sec): step 1/1. Catalyzes the attachment of serine to tRNA(Ser). Is also able to aminoacylate tRNA(Sec) with serine, to form the misacylated tRNA L-seryl-tRNA(Sec), which will be further converted into selenocysteinyl-tRNA(Sec). The chain is Serine--tRNA ligase from Lysinibacillus sphaericus (strain C3-41).